The sequence spans 800 residues: Phenylalanine--tRNA ligase beta subunit (800 aa).

Residues 39-154 (TKDIKNLVVG…ESQVPGTDAL (116 aa)) enclose the tRNA-binding domain. In terms of domain architecture, B5 spans 408–483 (AFITPIDITA…RIYGYDDIPS (76 aa)). The Mg(2+) site is built by D461, D467, E470, and E471. The FDX-ACB domain maps to 708–800 (PRFPGMSRDI…ALIEQGAVIR (93 aa)).

Belongs to the phenylalanyl-tRNA synthetase beta subunit family. Type 1 subfamily. Tetramer of two alpha and two beta subunits. Mg(2+) serves as cofactor.

The protein localises to the cytoplasm. It carries out the reaction tRNA(Phe) + L-phenylalanine + ATP = L-phenylalanyl-tRNA(Phe) + AMP + diphosphate + H(+). In Staphylococcus aureus (strain MSSA476), this protein is Phenylalanine--tRNA ligase beta subunit.